A 192-amino-acid polypeptide reads, in one-letter code: Charged multivesicular body protein 1 (192 aa).

Coiled coils occupy residues 7-35 (QLKF…KLKK) and 102-125 (NMDL…LDVQ). Positions 164-192 (QMGSAPSEKVQQGETDELTERLNRLKQKN) are disordered.

The protein belongs to the SNF7 family. As to quaternary structure, probable peripherally associated component of the endosomal sorting required for transport complex III (ESCRT-III).

The protein localises to the endosome membrane. Functionally, probable peripherally associated component of the endosomal sorting required for transport complex III (ESCRT-III) which is involved in multivesicular bodies (MVBs) formation and sorting of endosomal cargo proteins into MVBs. MVBs contain intraluminal vesicles (ILVs) that are generated by invagination and scission from the limiting membrane of the endosome and are delivered to lysosomes enabling degradation of membrane proteins. This is Charged multivesicular body protein 1 (chmp1) from Dictyostelium discoideum (Social amoeba).